A 402-amino-acid polypeptide reads, in one-letter code: Caspase-1 (402 aa).

A CARD domain is found at 1–91; that stretch reads MADKVLRAKR…YLAEILELQS (91 aa). A propeptide spanning residues 1-118 is cleaved from the precursor; sequence MADKVLRAKR…PFSSETKEKL (118 aa). Catalysis depends on residues His-236 and Cys-284. The propeptide occupies 297–314; that stretch reads SVGNSEEGFLTDAIFEDD. At Ser-301 the chain carries Phosphoserine.

Belongs to the peptidase C14A family. In terms of assembly, heterotetramer that consists of two anti-parallel arranged heterodimers, each one formed by a 20 kDa (Caspase-1 subunit p20) and a 10 kDa (Caspase-1 subunit p10) subunit. May be a component of the inflammasome, a protein complex which also includes PYCARD, CARD8 and NLRP2 and whose function would be the activation of pro-inflammatory caspases. Component of the AIM2 PANoptosome complex, a multiprotein complex that drives inflammatory cell death (PANoptosis). Both the p10 and p20 subunits interact with MEFV. Interacts with CARD17P/INCA and CARD18. Interacts with SERPINB1; this interaction regulates CASP1 activity. Heterotetramer that consists of two anti-parallel arranged heterodimers, each one formed by a 20 kDa (Caspase-1 subunit p20) and a 10 kDa (Caspase-1 subunit p10) subunit. In terms of processing, the two subunits are derived from the precursor sequence by an autocatalytic mechanism. Ubiquitinated via 'Lys-11'-linked polyubiquitination. Deubiquitinated by USP8.

It localises to the cytoplasm. It is found in the cell membrane. The enzyme catalyses Strict requirement for an Asp residue at position P1 and has a preferred cleavage sequence of Tyr-Val-Ala-Asp-|-.. Thiol protease involved in a variety of inflammatory processes by proteolytically cleaving other proteins, such as the precursors of the inflammatory cytokines interleukin-1 beta (IL1B) and interleukin 18 (IL18) as well as the pyroptosis inducer Gasdermin-D (GSDMD), into active mature peptides. Plays a key role in cell immunity as an inflammatory response initiator: once activated through formation of an inflammasome complex, it initiates a pro-inflammatory response through the cleavage of the two inflammatory cytokines IL1B and IL18, releasing the mature cytokines which are involved in a variety of inflammatory processes. Cleaves a tetrapeptide after an Asp residue at position P1. Also initiates pyroptosis, a programmed lytic cell death pathway, through cleavage of GSDMD. In contrast to cleavage of interleukin IL1B, recognition and cleavage of GSDMD is not strictly dependent on the consensus cleavage site but depends on an exosite interface on CASP1 that recognizes and binds the Gasdermin-D, C-terminal (GSDMD-CT) part. Cleaves and activates CASP7 in response to bacterial infection, promoting plasma membrane repair. Upon inflammasome activation, during DNA virus infection but not RNA virus challenge, controls antiviral immunity through the cleavage of CGAS, rendering it inactive. In apoptotic cells, cleaves SPHK2 which is released from cells and remains enzymatically active extracellularly. The sequence is that of Caspase-1 (Casp1) from Rattus norvegicus (Rat).